A 189-amino-acid chain; its full sequence is Large ribosomal subunit protein bL17 (189 aa).

It belongs to the bacterial ribosomal protein bL17 family. Part of the 50S ribosomal subunit. Contacts protein L32.

The chain is Large ribosomal subunit protein bL17 from Rhodococcus jostii (strain RHA1).